Reading from the N-terminus, the 89-residue chain is Small ribosomal subunit protein uS15 (89 aa).

Belongs to the universal ribosomal protein uS15 family. As to quaternary structure, part of the 30S ribosomal subunit. Forms a bridge to the 50S subunit in the 70S ribosome, contacting the 23S rRNA.

In terms of biological role, one of the primary rRNA binding proteins, it binds directly to 16S rRNA where it helps nucleate assembly of the platform of the 30S subunit by binding and bridging several RNA helices of the 16S rRNA. Forms an intersubunit bridge (bridge B4) with the 23S rRNA of the 50S subunit in the ribosome. This Edwardsiella ictaluri (strain 93-146) protein is Small ribosomal subunit protein uS15.